We begin with the raw amino-acid sequence, 339 residues long: Phosphate acyltransferase (339 aa).

The protein belongs to the PlsX family. In terms of assembly, homodimer. Probably interacts with PlsY.

It localises to the cytoplasm. The catalysed reaction is a fatty acyl-[ACP] + phosphate = an acyl phosphate + holo-[ACP]. Its pathway is lipid metabolism; phospholipid metabolism. Catalyzes the reversible formation of acyl-phosphate (acyl-PO(4)) from acyl-[acyl-carrier-protein] (acyl-ACP). This enzyme utilizes acyl-ACP as fatty acyl donor, but not acyl-CoA. The sequence is that of Phosphate acyltransferase from Helicobacter pylori (strain J99 / ATCC 700824) (Campylobacter pylori J99).